The following is a 394-amino-acid chain: Elongation factor Tu 2 (394 aa).

The tr-type G domain occupies 10–204 (KPHVNVGTIG…FLDSYIPEPE (195 aa)). Positions 19–26 (GHVDHGKT) are G1. 19-26 (GHVDHGKT) contacts GTP. Threonine 26 is a binding site for Mg(2+). A G2 region spans residues 60 to 64 (GITIN). The G3 stretch occupies residues 81-84 (DCPG). Residues 81-85 (DCPGH) and 136-139 (NKCD) contribute to the GTP site. Residues 136–139 (NKCD) are G4. The segment at 174-176 (SAL) is G5.

Belongs to the TRAFAC class translation factor GTPase superfamily. Classic translation factor GTPase family. EF-Tu/EF-1A subfamily. In terms of assembly, monomer.

The protein localises to the cytoplasm. It carries out the reaction GTP + H2O = GDP + phosphate + H(+). In terms of biological role, GTP hydrolase that promotes the GTP-dependent binding of aminoacyl-tRNA to the A-site of ribosomes during protein biosynthesis. This chain is Elongation factor Tu 2, found in Escherichia coli O139:H28 (strain E24377A / ETEC).